Consider the following 176-residue polypeptide: Ribosome maturation factor RimM (176 aa).

The PRC barrel domain maps to 97-176 (EDEFYWRDLI…QITVDWDPDF (80 aa)).

It belongs to the RimM family. As to quaternary structure, binds ribosomal protein uS19.

It localises to the cytoplasm. In terms of biological role, an accessory protein needed during the final step in the assembly of 30S ribosomal subunit, possibly for assembly of the head region. Essential for efficient processing of 16S rRNA. May be needed both before and after RbfA during the maturation of 16S rRNA. It has affinity for free ribosomal 30S subunits but not for 70S ribosomes. The sequence is that of Ribosome maturation factor RimM from Shewanella sediminis (strain HAW-EB3).